We begin with the raw amino-acid sequence, 497 residues long: MFTIKQQLSLDTTHEVLVVGMFEKNQPLDGIIAECDRRLGGQVSVLLKEGDISAKKKQISKVHTLNQAGVKRLYFVGLGKEEELTFDLLREAFGKLFKTLKQAKRTEAAIALDTFVTKDIDANDAAHALSEAYYLATYEFPGYKQKKNEPEKRIESITIYTEADQAEIEASVFVGSVYGKATNSARTLVNTPSNLLTAADLANYAVELANKYEFEYEILEKDDMEKLGMGAFLAVNQGSKNPPKMIVLKYQGKETWENVIGLVGKGVTFDTGGYSLKPRESMVDMKTDMAGAAAVLGAMEIIGELRPEQNVVAVIPATDNMISGEAFKPDDVITSMSGKTIEVKNTDAEGRLILADAITYAKHHGASYLIDVATLTGGVIVALGVHTTGAMTNNEALFEQVLEASAETGEFIWRLPITEKDKERVRSSKIADLNNSPGREGHAIMGGAFLGEFAEDTPWVHLDIAGTSVTSKEHDLGPSGATGVMVRTLATLVERFE.

Residues K265 and D270 each coordinate Mn(2+). K277 is an active-site residue. 3 residues coordinate Mn(2+): D288, D347, and E349. R351 is an active-site residue.

Belongs to the peptidase M17 family. Mn(2+) is required as a cofactor.

Its subcellular location is the cytoplasm. It catalyses the reaction Release of an N-terminal amino acid, Xaa-|-Yaa-, in which Xaa is preferably Leu, but may be other amino acids including Pro although not Arg or Lys, and Yaa may be Pro. Amino acid amides and methyl esters are also readily hydrolyzed, but rates on arylamides are exceedingly low.. The enzyme catalyses Release of an N-terminal amino acid, preferentially leucine, but not glutamic or aspartic acids.. Its function is as follows. Presumably involved in the processing and regular turnover of intracellular proteins. Catalyzes the removal of unsubstituted N-terminal amino acids from various peptides. This Geobacillus sp. (strain WCH70) protein is Probable cytosol aminopeptidase.